The following is a 467-amino-acid chain: UPF0236 protein TTE0033/TTE0744/TTE0838/TTE0852/TTE1082/TTE1247/TTE1519/TTE1678/TTE1739/TTE1823/TTE2212 (467 aa).

This sequence belongs to the UPF0236 family.

The sequence is that of UPF0236 protein TTE0033/TTE0744/TTE0838/TTE0852/TTE1082/TTE1247/TTE1519/TTE1678/TTE1739/TTE1823/TTE2212 from Caldanaerobacter subterraneus subsp. tengcongensis (strain DSM 15242 / JCM 11007 / NBRC 100824 / MB4) (Thermoanaerobacter tengcongensis).